Here is a 254-residue protein sequence, read N- to C-terminus: RING-H2 finger protein ATL28 (254 aa).

The helical transmembrane segment at 25-45 (VVLTGVLLFVIFAGFFSLFLW) threads the bilayer. The segment at 103-145 (CAICLSEFSDEDTVRLITVCRHPFHSNCIDLWFELHKTCPVCR) adopts an RING-type; atypical zinc-finger fold.

This sequence belongs to the RING-type zinc finger family. ATL subfamily.

It is found in the membrane. The catalysed reaction is S-ubiquitinyl-[E2 ubiquitin-conjugating enzyme]-L-cysteine + [acceptor protein]-L-lysine = [E2 ubiquitin-conjugating enzyme]-L-cysteine + N(6)-ubiquitinyl-[acceptor protein]-L-lysine.. Its pathway is protein modification; protein ubiquitination. The sequence is that of RING-H2 finger protein ATL28 (ATL28) from Arabidopsis thaliana (Mouse-ear cress).